The chain runs to 62 residues: Large ribosomal subunit protein eL24 (62 aa).

Zn(2+)-binding residues include Cys-6, Cys-9, Cys-32, and Cys-36. Residues 6–36 form a C4-type zinc finger; the sequence is CSFCEGKIEPGCGKKYVKKDGSVMQFCSSKC.

Belongs to the eukaryotic ribosomal protein eL24 family. Part of the 50S ribosomal subunit. Forms a cluster with proteins L3 and L14. Requires Zn(2+) as cofactor.

In terms of biological role, binds to the 23S rRNA. The polypeptide is Large ribosomal subunit protein eL24 (Methanococcus vannielii (strain ATCC 35089 / DSM 1224 / JCM 13029 / OCM 148 / SB)).